We begin with the raw amino-acid sequence, 156 residues long: Small ribosomal subunit protein uS7 (156 aa).

It belongs to the universal ribosomal protein uS7 family. As to quaternary structure, part of the 30S ribosomal subunit. Contacts proteins S9 and S11.

Its function is as follows. One of the primary rRNA binding proteins, it binds directly to 16S rRNA where it nucleates assembly of the head domain of the 30S subunit. Is located at the subunit interface close to the decoding center, probably blocks exit of the E-site tRNA. This Dictyoglomus turgidum (strain DSM 6724 / Z-1310) protein is Small ribosomal subunit protein uS7.